Here is an 867-residue protein sequence, read N- to C-terminus: Dynamin-1 (867 aa).

Residues 28–294 (DLDLPQIAVV…LTNHIRDTLP (267 aa)) form the Dynamin-type G domain. The interval 38-45 (GGQSAGKS) is G1 motif. Serine 41, glycine 43, lysine 44, serine 45, serine 46, arginine 59, and glycine 60 together coordinate GDP. Positions 64–66 (VTR) are G2 motif. Tyrosine 80 bears the Phosphotyrosine mark. At tyrosine 125 the chain carries 3'-nitrotyrosine; alternate. The residue at position 125 (tyrosine 125) is a Phosphotyrosine; alternate. Positions 136–139 (DLPG) are G3 motif. The G4 motif stretch occupies residues 205–208 (TKLD). The GDP site is built by lysine 206, aspartate 208, aspartate 211, asparagine 236, arginine 237, and glutamine 239. The G5 motif stretch occupies residues 235 to 238 (VNRS). Serine 306 and serine 347 each carry phosphoserine. Tyrosine 354 is subject to Phosphotyrosine. Position 512 is a phosphoserine (serine 512). Residues 515–625 (QDEILVIRKG…WKASFLRAGV (111 aa)) form the PH domain. A GED domain is found at 659–750 (VETIRNLVDS…IIGDINTTTV (92 aa)). The interval 767 to 867 (SVPAGRRSPT…HENRAGKARL (101 aa)) is disordered. Phosphoserine occurs at positions 774 and 778. Arginine 796 is modified (omega-N-methylarginine). Phosphoserine is present on serine 822. Pro residues predominate over residues 825–843 (PFGPPPQVPSRPNRAPPGV). Phosphoserine is present on residues glycine 847, leucine 851, and lysine 857. Residues 856-867 (GKHENRAGKARL) are compositionally biased toward basic and acidic residues.

Belongs to the TRAFAC class dynamin-like GTPase superfamily. Dynamin/Fzo/YdjA family. In terms of assembly, homodimer; homodimerization is mediated by the dynamin-type G domain which promotes assembly-stimulated GTPase activity. Homo-tetramer formed from two dimers in the absence of lipid. Oligomerizes into a helical polymer that self-assembles around the vesicle membrane, when associated to the menbrane through lipid binding. Interacts (via C-terminal proline-rich domain (PRD)) with SNX9 (via SH3 domain); this interaction allows regulation of DNM1 self-assembly during late stages of endocytic vesicle formation and supports DNM1's early functions in accelerating clathrin-coated pits (CCPs) maturation in non neuronals cell. Interacts (via C-terminal proline-rich domain (PRD)) with MYO1E (via SH3 domain); this interaction regulates receptor-mediated endocytosis. Interacts with SNX33 (via SH3 domain); this interaction decreases DNM1-dependent endocytosis. Interacts with DIAPH1. Interacts with GRB2 (via SH3 domain); this interaction mediates disassembly of DNM1 polymers, therefore modulates self-assembly. Forms a complex with BIN1 (via SH3 domain) and SH3GL2 (via SH3 domain). Forms a complex with SH3GL2 (via SH3 domain) and AMPH (via SH3 domain). Forms a complex with SH3GL2 (via SH3 domain) and SYNJ1. Interacts (via C-terminal proline-rich domain (PRD)) with SYT1; this interaction facilitates vesicle fission during clathrin-mediated endocytosis (CME). Interacts (via C-terminal proline-rich domain (PRD)) with PLCG1 (via SH3 domain); this interaction stimulates the release of GDP from DNM1 and enhances DNM1-dependent endocytosis. Interacts with SNPH; this interaction inhibits the binding of DNM1 to AMPH and DNM1-receptor-mediated endocytosis. Interacts with CAV1. Interacts with SH3GLB1 (via SH3 domain). Interacts with PACSIN1 (via SH3 domain), PACSIN2 (via SH3 domain) and PACSIN3 (via SH3 domain). Interacts with UNC119; this interaction decreases DNM1's GTPase activity and affects DNM1's interaction with AMPH. Interacts with AMPH. Interacts (GTP-bound form) with DNAJC6; this interaction allows clathrin-coated vesicle (CCV) formation at the plasma membrane. Post-translationally, phosphorylation at Ser-774 by GSK3B/GSK3-beta leads to inactivation of receptor-mediated endocytosis in non-neuronal cells. Dephosphorylation at Ser-774, through the EGFR downstream signaling, leads to activation and regulates early stages of clathrin-mediated endocytosis (CME). Phosphorylated on Tyr in response to EGF stimulation in cells expressing truncated EGFR. Phosphorylated by CDK5 leading to synaptic vesicle endocytosis (SVE) activation. Expressed exclusively in the brain.

It is found in the cell membrane. Its subcellular location is the membrane. It localises to the clathrin-coated pit. The protein localises to the cytoplasmic vesicle. The protein resides in the presynapse. It is found in the secretory vesicle. Its subcellular location is the chromaffin granule. The catalysed reaction is GTP + H2O = GDP + phosphate + H(+). Its function is as follows. Catalyzes the hydrolysis of GTP and utilizes this energy to mediate vesicle scission and participates in many forms of endocytosis, such as clathrin-mediated endocytosis or synaptic vesicle endocytosis as well as rapid endocytosis (RE). Associates to the membrane, through lipid binding, and self-assembles into rings and stacks of interconnected rings through oligomerization to form a helical polymer around the vesicle membrane leading to constriction of invaginated coated pits around their necks. Self-assembly of the helical polymer induces membrane tubules narrowing until the polymer reaches a length sufficient to trigger GTP hydrolysis. Depending on the curvature imposed on the tubules, membrane detachment from the helical polymer upon GTP hydrolysis can cause spontaneous hemifission followed by complete fission. May play a role in regulating early stages of clathrin-mediated endocytosis in non-neuronal cells through its activation by dephosphorylation via the signaling downstream of EGFR. Controls vesicle size at a step before fission, during formation of membrane pits, at hippocampal synapses. Controls plastic adaptation of the synaptic vesicle recycling machinery to high levels of activity. Mediates rapid endocytosis (RE), a Ca(2+)-dependent and clathrin- and K(+)-independent process in chromaffin cells. Microtubule-associated force-producing protein involved in producing microtubule bundles and able to bind and hydrolyze GTP. Through its interaction with DNAJC6, acts during the early steps of clathrin-coated vesicle (CCV) formation. This chain is Dynamin-1, found in Mus musculus (Mouse).